We begin with the raw amino-acid sequence, 818 residues long: Response regulator SSK1 (818 aa).

The Response regulatory domain maps to 611-769 (NVLIVEDNPI…WLERKVMEWG (159 aa)). Asp-660 is subject to 4-aspartylphosphate.

It belongs to the SSK1 family.

It localises to the cytoplasm. Functionally, two-domain response regulator protein in the two-component signal transduction system of the HOG1 pathway. Modulates stress response, melanin biosynthesis and virulence via its regulation of the phosphorylation of HOG1. The sequence is that of Response regulator SSK1 from Verticillium dahliae (strain VdLs.17 / ATCC MYA-4575 / FGSC 10137) (Verticillium wilt).